A 2555-amino-acid polypeptide reads, in one-letter code: Squalestatin hexaketide synthase clz14 (2555 aa).

The interval 1–84 (MDVSKEAGHH…PNATSTTTTT (84 aa)) is disordered. Residues 10 to 84 (HANGFANGNT…PNATSTTTTT (75 aa)) are compositionally biased toward low complexity. A Ketosynthase family 3 (KS3) domain is found at 91–511 (QVPVAICGIG…GSNTHIIIDS (421 aa)). Catalysis depends on for beta-ketoacyl synthase activity residues cysteine 261, histidine 398, and histidine 435. The tract at residues 611–928 (FIFTGQGAQW…LEGIGKLFCF (318 aa)) is malonyl-CoA:ACP transacylase (MAT) domain. The tract at residues 975-1104 (HELLGERSLE…GLVTASVVTS (130 aa)) is N-terminal hotdog fold. Positions 975–1256 (HELLGERSLE…RGFKCKKTDD (282 aa)) are dehydratase (DH) domain. The region spanning 975-1260 (HELLGERSLE…CKKTDDAFIQ (286 aa)) is the PKS/mFAS DH domain. Histidine 1007 acts as the Proton acceptor; for dehydratase activity in catalysis. The segment at 1117–1260 (SRKVDTSRWY…CKKTDDAFIQ (144 aa)) is C-terminal hotdog fold. Aspartate 1177 serves as the catalytic Proton donor; for dehydratase activity. The interval 1424 to 1595 (SFFQAAGLNK…GFEGAGTVVL (172 aa)) is methyltransferase (CMet) domain. Residues 1821 to 2141 (GMLNTLHWVG…RGVHMGRIVV (321 aa)) form an enoyl reductase (ER) (ER) domain region. The segment at 2165 to 2338 (STYLLTGGMG…PASVIDIAAI (174 aa)) is ketoreductase (KR) domain. In terms of domain architecture, Carrier spans 2468 to 2546 (IIFAQEIAKR…SLGRLATKRL (79 aa)). Residue serine 2505 is modified to O-(pantetheine 4'-phosphoryl)serine.

Its pathway is secondary metabolite biosynthesis. Highly reducing polyketide synthase (HR-PKS); part of the gene cluster that mediates the biosynthesis of squalestatin S1 (SQS1, also known as zaragozic acid A), a heavily oxidized fungal polyketide that offers potent cholesterol lowering activity by targeting squalene synthase (SS). SQS1 is composed of a 2,8-dioxobicyclic[3.2.1]octane-3,4,5-tricarboxyclic acid core that is connected to two lipophilic polyketide arms. These initial steps feature the priming of an unusual benzoic acid starter unit onto the highly reducing polyketide synthase clz14, followed by oxaloacetate extension and product release to generate a tricarboxylic acid containing product. The phenylalanine ammonia lyase (PAL) clz10 and the acyl-CoA ligase clz12 are involved in transforming phenylalanine into benzoyl-CoA. The citrate synthase-like protein clz17 is involved in connecting the C-alpha-carbons of the hexaketide chain and oxaloacetate to afford the tricarboxylic acid unit. The potential hydrolytic enzymes, clz11 and clz13, are in close proximity to pks2 and may participate in product release. On the other side, the tetraketide arm is synthesized by a the squalestatin tetraketide synthase clz2 and enzymatically esterified to the core in the last biosynthetic step, by the acetyltransferase clz6. The biosynthesis of the tetraketide must involve 3 rounds of chain extension. After the first and second rounds methyl-transfer occurs, and in all rounds of extension the ketoreductase and dehydratase are active. The enoyl reductase and C-MeT of clz2 are not active in the final round of extension. The acetyltransferase clz6 appears to have a broad substrate selectivity for its acyl CoA substrate, allowing the in vitro synthesis of novel squalestatins. The biosynthesis of SQS1 requires several oxidative steps likely performed by oxidoreductases clz3, clz15 and clz16. Finally, in support of the identification of the cluster as being responsible for SQS1 production, the cluster contains a gene encoding a putative squalene synthase (SS) clz20, suggesting a likely mechanism for self-resistance. The sequence is that of Squalestatin hexaketide synthase clz14 from Cochliobolus lunatus (Filamentous fungus).